Here is a 365-residue protein sequence, read N- to C-terminus: Chorismate synthase (365 aa).

The disordered stretch occupies residues 41–61; sequence IQKELDRRRPGQSEVSTPRHE. Arg48 lines the NADP(+) pocket. FMN contacts are provided by residues 125–127, Gly285, 300–304, and Arg327; these read RSS and KPTPS.

The protein belongs to the chorismate synthase family. It depends on FMNH2 as a cofactor.

It catalyses the reaction 5-O-(1-carboxyvinyl)-3-phosphoshikimate = chorismate + phosphate. It functions in the pathway metabolic intermediate biosynthesis; chorismate biosynthesis; chorismate from D-erythrose 4-phosphate and phosphoenolpyruvate: step 7/7. In terms of biological role, catalyzes the anti-1,4-elimination of the C-3 phosphate and the C-6 proR hydrogen from 5-enolpyruvylshikimate-3-phosphate (EPSP) to yield chorismate, which is the branch point compound that serves as the starting substrate for the three terminal pathways of aromatic amino acid biosynthesis. This reaction introduces a second double bond into the aromatic ring system. The protein is Chorismate synthase of Methanosarcina barkeri (strain Fusaro / DSM 804).